We begin with the raw amino-acid sequence, 148 residues long: SsrA-binding protein (148 aa).

Residues 119-148 (AKGKKQHDKRQSMKEADWKREKQRLIKHTR) form a disordered region. Residues 127 to 142 (KRQSMKEADWKREKQR) are compositionally biased toward basic and acidic residues.

It belongs to the SmpB family.

The protein localises to the cytoplasm. Its function is as follows. Required for rescue of stalled ribosomes mediated by trans-translation. Binds to transfer-messenger RNA (tmRNA), required for stable association of tmRNA with ribosomes. tmRNA and SmpB together mimic tRNA shape, replacing the anticodon stem-loop with SmpB. tmRNA is encoded by the ssrA gene; the 2 termini fold to resemble tRNA(Ala) and it encodes a 'tag peptide', a short internal open reading frame. During trans-translation Ala-aminoacylated tmRNA acts like a tRNA, entering the A-site of stalled ribosomes, displacing the stalled mRNA. The ribosome then switches to translate the ORF on the tmRNA; the nascent peptide is terminated with the 'tag peptide' encoded by the tmRNA and targeted for degradation. The ribosome is freed to recommence translation, which seems to be the essential function of trans-translation. This is SsrA-binding protein from Neisseria gonorrhoeae (strain ATCC 700825 / FA 1090).